The primary structure comprises 509 residues: Steroid 17-alpha-hydroxylase/17,20 lyase (509 aa).

Asparagine 202 contributes to the substrate binding site. Cysteine 442 contributes to the heme binding site.

It belongs to the cytochrome P450 family. Heme serves as cofactor.

The protein resides in the endoplasmic reticulum membrane. The protein localises to the microsome membrane. The enzyme catalyses a C21-steroid + reduced [NADPH--hemoprotein reductase] + O2 = a 17alpha-hydroxy-C21-steroid + oxidized [NADPH--hemoprotein reductase] + H2O + H(+). The catalysed reaction is progesterone + reduced [NADPH--hemoprotein reductase] + O2 = 17alpha-hydroxyprogesterone + oxidized [NADPH--hemoprotein reductase] + H2O + H(+). It catalyses the reaction pregnenolone + reduced [NADPH--hemoprotein reductase] + O2 = 17alpha-hydroxypregnenolone + oxidized [NADPH--hemoprotein reductase] + H2O + H(+). It carries out the reaction 17alpha-hydroxyprogesterone + reduced [NADPH--hemoprotein reductase] + O2 = androst-4-ene-3,17-dione + acetate + oxidized [NADPH--hemoprotein reductase] + H2O + 2 H(+). The enzyme catalyses 17alpha-hydroxyprogesterone + reduced [NADPH--hemoprotein reductase] + O2 = 16alpha,17alpha-dihydroxyprogesterone + oxidized [NADPH--hemoprotein reductase] + H2O + H(+). The catalysed reaction is 16alpha,17alpha-dihydroxyprogesterone + reduced [NADPH--hemoprotein reductase] + O2 = 6beta,16alpha,17alpha-trihydroxyprogesterone + oxidized [NADPH--hemoprotein reductase] + H2O + H(+). It catalyses the reaction 17alpha-hydroxypregnenolone + reduced [NADPH--hemoprotein reductase] + O2 = 3beta-hydroxyandrost-5-en-17-one + acetate + oxidized [NADPH--hemoprotein reductase] + H2O + 2 H(+). It carries out the reaction 16alpha,17alpha-dihydroxypregnenolone + reduced [NADPH--hemoprotein reductase] + O2 = 3beta,16alpha-dihydroxy-androst-5-en-17-one + acetate + oxidized [NADPH--hemoprotein reductase] + H2O + 2 H(+). The enzyme catalyses 3beta-hydroxyandrost-5-en-17-one + reduced [NADPH--hemoprotein reductase] + O2 = 3beta,16alpha-dihydroxy-androst-5-en-17-one + oxidized [NADPH--hemoprotein reductase] + H2O + H(+). The catalysed reaction is androst-4-ene-3,17-dione + reduced [NADPH--hemoprotein reductase] + O2 = 16alpha-hydroxyandrost-4-ene-3,17-dione + oxidized [NADPH--hemoprotein reductase] + H2O + H(+). The protein operates within steroid hormone biosynthesis. It participates in steroid biosynthesis; glucocorticoid biosynthesis. Regulated predominantly by intracellular cAMP levels. The 17,20-lyase activity is stimulated by cytochrome b5, which acts as an allosteric effector increasing the Vmax of the lyase activity. A cytochrome P450 monooxygenase involved in corticoid and androgen biosynthesis. Catalyzes 17-alpha hydroxylation of C21 steroids, which is common for both pathways. A second oxidative step, required only for androgen synthesis, involves an acyl-carbon cleavage. The 17-alpha hydroxy intermediates, as part of adrenal glucocorticoids biosynthesis pathway, are precursors of cortisol. Hydroxylates steroid hormones, pregnenolone and progesterone to form 17-alpha hydroxy metabolites, followed by the cleavage of the C17-C20 bond to form C19 steroids, dehydroepiandrosterone (DHEA) and androstenedione. Has 16-alpha hydroxylase activity. Catalyzes 16-alpha hydroxylation of 17-alpha hydroxy pregnenolone, followed by the cleavage of the C17-C20 bond to form 16-alpha-hydroxy DHEA. Also 16-alpha hydroxylates androgens, relevant for estriol synthesis. Mechanistically, uses molecular oxygen inserting one oxygen atom into a substrate, and reducing the second into a water molecule, with two electrons provided by NADPH via cytochrome P450 reductase (CPR; NADPH-ferrihemoprotein reductase). This chain is Steroid 17-alpha-hydroxylase/17,20 lyase (CYP17A1), found in Capra hircus (Goat).